The primary structure comprises 323 residues: Prenyl transferase (323 aa).

Residues Lys46, Arg49, and His81 each contribute to the isopentenyl diphosphate site. Mg(2+) is bound by residues Asp88 and Asp92. Arg97 contributes to the an all-trans-polyprenyl diphosphate binding site. Arg98 provides a ligand contact to isopentenyl diphosphate. An all-trans-polyprenyl diphosphate contacts are provided by Lys174, Thr175, and Gln212.

The protein belongs to the FPP/GGPP synthase family. Mg(2+) serves as cofactor.

It localises to the plastid. The protein resides in the chloroplast. In terms of biological role, possible role in synthesis of the nonaprenyl side chain of plastoquinone or in synthesis of other prenyl chains such as undekaprenyl pyrophosphate. The chain is Prenyl transferase (preA) from Cyanidium caldarium (Red alga).